Consider the following 472-residue polypeptide: Homeobox protein PKNOX2 (472 aa).

A disordered region spans residues 1-62 (MMQHASPAPA…STPVPSAPID (62 aa)). The segment covering 26 to 38 (DSPQMTATAQPPS) has biased composition (polar residues). The segment covering 46 to 56 (SAPSAAASTPV) has biased composition (low complexity). In terms of domain architecture, MEIS N-terminal spans 96–179 (GSECITSASF…MHSDNLLRND (84 aa)). The homeobox DNA-binding region spans 291–350 (KRGVLPKHATNIMRSWLFQHLMHPYPTEDEKRQIAAQTNLTLLQVNNWFINARRRILQPM). Disordered stretches follow at residues 351–371 (LDAS…QHRP), 386–405 (QQQG…LDNL), and 422–472 (MAAH…DSLE). Residues 361-371 (KAKKIKSQHRP) are compositionally biased toward basic residues. The segment covering 429–454 (LDGTEEEDEDEMEEEEEEELEEEVDE) has biased composition (acidic residues).

Belongs to the TALE/MEIS homeobox family.

The protein localises to the nucleus. This chain is Homeobox protein PKNOX2 (PKNOX2), found in Homo sapiens (Human).